A 63-amino-acid polypeptide reads, in one-letter code: uncharacterized protein (63 aa).

Residues 1 to 21 form the signal peptide; the sequence is MYLSLLLILLAWTLWLGNSLA.

This is an uncharacterized protein from Haemophilus influenzae (strain ATCC 51907 / DSM 11121 / KW20 / Rd).